The sequence spans 415 residues: DNA polymerase IV 2 (415 aa).

In terms of domain architecture, UmuC spans 7–183 (ILHADLDAFY…LPVSLMWGVG (177 aa)). Mg(2+) contacts are provided by aspartate 11 and aspartate 101. Glutamate 102 is an active-site residue.

It belongs to the DNA polymerase type-Y family. As to quaternary structure, monomer. It depends on Mg(2+) as a cofactor.

Its subcellular location is the cytoplasm. It carries out the reaction DNA(n) + a 2'-deoxyribonucleoside 5'-triphosphate = DNA(n+1) + diphosphate. Its function is as follows. Poorly processive, error-prone DNA polymerase involved in untargeted mutagenesis. Copies undamaged DNA at stalled replication forks, which arise in vivo from mismatched or misaligned primer ends. These misaligned primers can be extended by PolIV. Exhibits no 3'-5' exonuclease (proofreading) activity. May be involved in translesional synthesis, in conjunction with the beta clamp from PolIII. This Mesorhizobium japonicum (strain LMG 29417 / CECT 9101 / MAFF 303099) (Mesorhizobium loti (strain MAFF 303099)) protein is DNA polymerase IV 2 (dinB2).